Reading from the N-terminus, the 418-residue chain is Neurotensin receptor type 1 (418 aa).

The Extracellular portion of the chain corresponds to 1–67 (MRLNSSAPGT…TDIYSKVLVT (67 aa)). N-linked (GlcNAc...) asparagine glycosylation is found at Asn4, Asn37, and Asn41. The chain crosses the membrane as a helical span at residues 68–88 (AVYLALFVVGTVGNTVTAFTL). The Cytoplasmic segment spans residues 89–102 (ARKKSLQSLQSTVH). The chain crosses the membrane as a helical span at residues 103–122 (YHLGSLALSDLLTLLLAMPV). Over 123–142 (ELYNFIWVHHPWAFGDAGCR) the chain is Extracellular. Residues Cys141 and Cys224 are joined by a disulfide bond. A helical transmembrane segment spans residues 143-164 (GYYFLRDACTYATALNVASLSV). Topologically, residues 165–184 (ERYLAICHPFKAKTLMSRSR) are cytoplasmic. Residues 185-205 (TKKFISAIWLASALLAVPMLF) form a helical membrane-spanning segment. Residues 206–234 (TMGEQNRSADGQHAGGLVCTPTIHTATVK) lie on the Extracellular side of the membrane. A helical transmembrane segment spans residues 235-259 (VVIQVNTFMSFIFPMVVISVLNTII). The Cytoplasmic portion of the chain corresponds to 260–303 (ANKLTVMVRQAAEQGQVCTVGGEHSTFSMAIEPGRVQALRHGVR). A helical transmembrane segment spans residues 304–325 (VLRAVVIAFVVCWLPYHVRRLM). Residues 321-344 (VRRLMFCYISDEQWTPFLYDFYHY) are neurotensin binding. Residues 326–343 (FCYISDEQWTPFLYDFYH) lie on the Extracellular side of the membrane. Residues 344–364 (YFYMVTNALFYVSSTINPILY) traverse the membrane as a helical segment. Residues 365 to 418 (NLVSANFRHIFLATLACLCPVWRRRRKRPAFSRKADSVSSNHTLSSNATRETLY) lie on the Cytoplasmic side of the membrane. Residues Cys381 and Cys383 are each lipidated (S-palmitoyl cysteine).

It belongs to the G-protein coupled receptor 1 family. Neurotensin receptor subfamily. NTSR1 sub-subfamily. Interacts (palmitoylated form) with GNA11. In terms of processing, N-glycosylated. Palmitoylated; this is required for normal localization at membrane rafts and normal GNA11-mediated activation of down-stream signaling cascades. The palmitoylation level increases in response to neurotensin treatment. In terms of tissue distribution, expressed in prostate (at protein level). Detected in colon and peripheral blood mononuclear cells. Detected at very low levels in brain.

It localises to the cell membrane. The protein resides in the membrane raft. Functionally, G-protein coupled receptor for the tridecapeptide neurotensin (NTS). Signaling is effected via G proteins that activate a phosphatidylinositol-calcium second messenger system. Signaling leads to the activation of downstream MAP kinases and protects cells against apoptosis. The protein is Neurotensin receptor type 1 (NTSR1) of Homo sapiens (Human).